The primary structure comprises 237 residues: MIISFEKLGEKYKIIDLNLNSIKQKIGDSLNIKEIKPTKIICVGLNYIDHAKELNMEIPEYPIIFLKPTSAIIYNEDYIIRPRISKRVDYEVELAIVIGKKCKNIKKDEANDYIMGYTILNDVTARDLQQKDGQWTRAKSFDTFCPIGPRIVKDIDPMNLNIECRVNGEIKQKSNTKNMIFDVYELVEFVASIMTLYPGDIISTGTPPGVGELKAGDVVECEIEGIGILRNYVKDEE.

The a divalent metal cation site is built by Glu91, Glu93, and Asp122.

This sequence belongs to the FAH family.

This is an uncharacterized protein from Methanocaldococcus jannaschii (strain ATCC 43067 / DSM 2661 / JAL-1 / JCM 10045 / NBRC 100440) (Methanococcus jannaschii).